The primary structure comprises 419 residues: Probable dual-specificity RNA methyltransferase RlmN (419 aa).

The interval 1-21 (MTAESDSPDGPVSAGTGRPVR) is disordered. The Proton acceptor role is filled by glutamate 124. Residues 130-369 (YPDRATVCVS…ATTVRDTRGR (240 aa)) form the Radical SAM core domain. The cysteines at positions 137 and 375 are disulfide-linked. Residues cysteine 144, cysteine 148, and cysteine 151 each contribute to the [4Fe-4S] cluster site. Residues 199-200 (GE), serine 233, 256-258 (SLH), and asparagine 332 each bind S-adenosyl-L-methionine. Cysteine 375 serves as the catalytic S-methylcysteine intermediate. A disordered region spans residues 383–419 (AGRARRVESARPVESARPVGVAGAASGSPAHGSRVLR). The span at 397–419 (SARPVGVAGAASGSPAHGSRVLR) shows a compositional bias: low complexity.

The protein belongs to the radical SAM superfamily. RlmN family. The cofactor is [4Fe-4S] cluster.

It is found in the cytoplasm. It catalyses the reaction adenosine(2503) in 23S rRNA + 2 reduced [2Fe-2S]-[ferredoxin] + 2 S-adenosyl-L-methionine = 2-methyladenosine(2503) in 23S rRNA + 5'-deoxyadenosine + L-methionine + 2 oxidized [2Fe-2S]-[ferredoxin] + S-adenosyl-L-homocysteine. The catalysed reaction is adenosine(37) in tRNA + 2 reduced [2Fe-2S]-[ferredoxin] + 2 S-adenosyl-L-methionine = 2-methyladenosine(37) in tRNA + 5'-deoxyadenosine + L-methionine + 2 oxidized [2Fe-2S]-[ferredoxin] + S-adenosyl-L-homocysteine. In terms of biological role, specifically methylates position 2 of adenine 2503 in 23S rRNA and position 2 of adenine 37 in tRNAs. The sequence is that of Probable dual-specificity RNA methyltransferase RlmN from Frankia alni (strain DSM 45986 / CECT 9034 / ACN14a).